Here is a 217-residue protein sequence, read N- to C-terminus: Pyridoxine/pyridoxamine 5'-phosphate oxidase (217 aa).

Residues 13 to 16 and K71 contribute to the substrate site; that span reads RREY. Residues 66 to 71, 81 to 82, R87, K88, and Q110 each bind FMN; these read RIVLLK and YT. 3 residues coordinate substrate: Y128, R132, and S136. FMN is bound by residues 145 to 146 and W190; that span reads QS. 196–198 contributes to the substrate binding site; the sequence is RLH. R200 serves as a coordination point for FMN.

It belongs to the pyridoxamine 5'-phosphate oxidase family. As to quaternary structure, homodimer. FMN is required as a cofactor.

The enzyme catalyses pyridoxamine 5'-phosphate + O2 + H2O = pyridoxal 5'-phosphate + H2O2 + NH4(+). It carries out the reaction pyridoxine 5'-phosphate + O2 = pyridoxal 5'-phosphate + H2O2. Its pathway is cofactor metabolism; pyridoxal 5'-phosphate salvage; pyridoxal 5'-phosphate from pyridoxamine 5'-phosphate: step 1/1. The protein operates within cofactor metabolism; pyridoxal 5'-phosphate salvage; pyridoxal 5'-phosphate from pyridoxine 5'-phosphate: step 1/1. In terms of biological role, catalyzes the oxidation of either pyridoxine 5'-phosphate (PNP) or pyridoxamine 5'-phosphate (PMP) into pyridoxal 5'-phosphate (PLP). This chain is Pyridoxine/pyridoxamine 5'-phosphate oxidase, found in Yersinia enterocolitica serotype O:8 / biotype 1B (strain NCTC 13174 / 8081).